The following is a 122-amino-acid chain: Large ribosomal subunit protein uL14 (122 aa).

It belongs to the universal ribosomal protein uL14 family. Part of the 50S ribosomal subunit. Forms a cluster with proteins L3 and L19. In the 70S ribosome, L14 and L19 interact and together make contacts with the 16S rRNA in bridges B5 and B8.

Its function is as follows. Binds to 23S rRNA. Forms part of two intersubunit bridges in the 70S ribosome. The sequence is that of Large ribosomal subunit protein uL14 from Synechococcus sp. (strain JA-3-3Ab) (Cyanobacteria bacterium Yellowstone A-Prime).